Here is a 150-residue protein sequence, read N- to C-terminus: Endoribonuclease YbeY (150 aa).

The Zn(2+) site is built by His-116, His-120, and His-126.

This sequence belongs to the endoribonuclease YbeY family. Requires Zn(2+) as cofactor.

The protein localises to the cytoplasm. Single strand-specific metallo-endoribonuclease involved in late-stage 70S ribosome quality control and in maturation of the 3' terminus of the 16S rRNA. This is Endoribonuclease YbeY from Beutenbergia cavernae (strain ATCC BAA-8 / DSM 12333 / CCUG 43141 / JCM 11478 / NBRC 16432 / NCIMB 13614 / HKI 0122).